The primary structure comprises 759 residues: MTQPVRRQPFTATITGSPRIGPRRELKRATEGYWAGRTSRSELEAVAATLRRDTWSALAAAGLDSVPVNTFSYYDQMLDTAVLLGALPPRVSPVSDGLDRYFAAARGTDQIAPLEMTKWFDTNYHYLVPEIGPSTTFTLHPGKVLAELKEALGQGIPARPVIIGPITFLLLSKAVDGAGAPIERLEELVPVYSELLSLLADGGAQWVQFDEPALVTDLSPDAPALAEAVYTALCSVSNRPAIYVATYFGDPGAALPALARTPVEAIGVDLVAGADTSVAGVPELAGKTLVAGVVDGRNVWRTDLEAALGTLATLLGSAATVAVSTSCSTLHVPYSLEPETDLDDALRSWLAFGAEKVREVVVLARALRDGHDAVADEIASSRAAIASRKRDPRLHNGQIRARIEAIVASGAHRGNAAQRRASQDARLHLPPLPTTTIGSYPQTSAIRVARAALRAGEIDEAEYVRRMRQEITEVIALQERLGLDVLVHGEPERNDMVQYFAEQLAGFFATQNGWVQSYGSRCVRPPILYGDVSRPRAMTVEWITYAQSLTDKPVKGMLTGPVTILAWSFVRDDQPLADTANQVALAIRDETVDLQSAGIAVIQVDEPALRELLPLRRADQAEYLRWAVGAFRLATSGVSDATQIHTHLCYSEFGEVIGAIADLDADVTSIEAARSHMEVLDDLNAIGFANGVGPGVYDIHSPRVPSAEEMADSLRAALRAVPAERLWVNPDCGLKTRNVDEVTASLHNMVAAAREVRAG.

Over residues 1-16 (MTQPVRRQPFTATITG) the composition is skewed to polar residues. Positions 1–22 (MTQPVRRQPFTATITGSPRIGP) are disordered. Residues 24–27 (RELK) and Lys-118 each bind 5-methyltetrahydropteroyltri-L-glutamate. L-homocysteine is bound by residues 437–439 (IGS) and Glu-490. Residues 437-439 (IGS) and Glu-490 each bind L-methionine. 5-methyltetrahydropteroyltri-L-glutamate contacts are provided by residues 521 to 522 (RC) and Trp-567. Asp-605 contributes to the L-homocysteine binding site. Asp-605 contributes to the L-methionine binding site. 5-methyltetrahydropteroyltri-L-glutamate is bound at residue Glu-611. 3 residues coordinate Zn(2+): His-647, Cys-649, and Glu-671. His-700 (proton donor) is an active-site residue. Cys-732 lines the Zn(2+) pocket.

It belongs to the vitamin-B12 independent methionine synthase family. Zn(2+) serves as cofactor.

The enzyme catalyses 5-methyltetrahydropteroyltri-L-glutamate + L-homocysteine = tetrahydropteroyltri-L-glutamate + L-methionine. The protein operates within amino-acid biosynthesis; L-methionine biosynthesis via de novo pathway; L-methionine from L-homocysteine (MetE route): step 1/1. Functionally, catalyzes the transfer of a methyl group from 5-methyltetrahydrofolate to homocysteine resulting in methionine formation. This is 5-methyltetrahydropteroyltriglutamate--homocysteine methyltransferase from Mycobacterium tuberculosis (strain ATCC 25177 / H37Ra).